A 396-amino-acid polypeptide reads, in one-letter code: Elongation factor Tu 1 (396 aa).

The region spanning 10–206 (KPHVNIGTIG…AVDEYIPTPE (197 aa)) is the tr-type G domain. The segment at 19 to 26 (GHVDHGKT) is G1. 19–26 (GHVDHGKT) is a GTP binding site. Residue Thr-26 participates in Mg(2+) binding. The G2 stretch occupies residues 60–64 (GITIN). The segment at 81–84 (DCPG) is G3. Residues 81-85 (DCPGH) and 136-139 (NKVD) contribute to the GTP site. The tract at residues 136-139 (NKVD) is G4. The segment at 174-176 (SAL) is G5.

This sequence belongs to the TRAFAC class translation factor GTPase superfamily. Classic translation factor GTPase family. EF-Tu/EF-1A subfamily. Monomer.

It localises to the cytoplasm. The enzyme catalyses GTP + H2O = GDP + phosphate + H(+). Its function is as follows. GTP hydrolase that promotes the GTP-dependent binding of aminoacyl-tRNA to the A-site of ribosomes during protein biosynthesis. The polypeptide is Elongation factor Tu 1 (Hyphomonas neptunium (strain ATCC 15444)).